Consider the following 543-residue polypeptide: Glutamyl-tRNA(Gln) amidotransferase subunit A, chloroplastic/mitochondrial (543 aa).

Active-site charge relay system residues include K123 and S198. The active-site Acyl-ester intermediate is the S222.

Belongs to the amidase family. GatA subfamily. Subunit of the heterotrimeric GatCAB amidotransferase (AdT) complex, composed of A, B and C subunits.

Its subcellular location is the mitochondrion. It is found in the plastid. The protein resides in the chloroplast stroma. The enzyme catalyses L-glutamyl-tRNA(Gln) + L-glutamine + ATP + H2O = L-glutaminyl-tRNA(Gln) + L-glutamate + ADP + phosphate + H(+). Functionally, allows the formation of correctly charged Gln-tRNA(Gln) through the transamidation of misacylated Glu-tRNA(Gln) in chloroplasts and mitochondria. The reaction takes place in the presence of glutamine and ATP through an activated gamma-phospho-Glu-tRNA(Gln). This Oryza sativa subsp. japonica (Rice) protein is Glutamyl-tRNA(Gln) amidotransferase subunit A, chloroplastic/mitochondrial.